The sequence spans 255 residues: tRNA1(Val) (adenine(37)-N6)-methyltransferase (255 aa).

This sequence belongs to the methyltransferase superfamily. tRNA (adenine-N(6)-)-methyltransferase family.

The protein localises to the cytoplasm. It catalyses the reaction adenosine(37) in tRNA1(Val) + S-adenosyl-L-methionine = N(6)-methyladenosine(37) in tRNA1(Val) + S-adenosyl-L-homocysteine + H(+). Its function is as follows. Specifically methylates the adenine in position 37 of tRNA(1)(Val) (anticodon cmo5UAC). This is tRNA1(Val) (adenine(37)-N6)-methyltransferase from Porphyromonas gingivalis (strain ATCC 33277 / DSM 20709 / CIP 103683 / JCM 12257 / NCTC 11834 / 2561).